Consider the following 157-residue polypeptide: SsrA-binding protein (157 aa).

The disordered stretch occupies residues 133–157; sequence LHDKRETAKERDWQRDKARLMRDKG. Residues 135–157 show a composition bias toward basic and acidic residues; it reads DKRETAKERDWQRDKARLMRDKG.

Belongs to the SmpB family.

It localises to the cytoplasm. In terms of biological role, required for rescue of stalled ribosomes mediated by trans-translation. Binds to transfer-messenger RNA (tmRNA), required for stable association of tmRNA with ribosomes. tmRNA and SmpB together mimic tRNA shape, replacing the anticodon stem-loop with SmpB. tmRNA is encoded by the ssrA gene; the 2 termini fold to resemble tRNA(Ala) and it encodes a 'tag peptide', a short internal open reading frame. During trans-translation Ala-aminoacylated tmRNA acts like a tRNA, entering the A-site of stalled ribosomes, displacing the stalled mRNA. The ribosome then switches to translate the ORF on the tmRNA; the nascent peptide is terminated with the 'tag peptide' encoded by the tmRNA and targeted for degradation. The ribosome is freed to recommence translation, which seems to be the essential function of trans-translation. The protein is SsrA-binding protein of Methylobacterium sp. (strain 4-46).